A 1036-amino-acid polypeptide reads, in one-letter code: uncharacterized protein (1036 aa).

Transmembrane regions (helical) follow at residues 4–24 and 1004–1024; these read YLFI…NASL and ILWV…VLFL.

It belongs to the MG414/MG415 family.

It localises to the cell membrane. This is an uncharacterized protein from Mycoplasma genitalium (strain ATCC 33530 / DSM 19775 / NCTC 10195 / G37) (Mycoplasmoides genitalium).